Consider the following 356-residue polypeptide: (+)-(1(10)E,4E,6S,7R)-germacradien-6-ol synthase (356 aa).

Mg(2+)-binding residues include D86 and D91. A DDXXXD motif motif is present at residues 86 to 91 (DDEYCD). R181 contributes to the substrate binding site. The Mg(2+) site is built by N227 and S231. K234 provides a ligand contact to substrate. E235 is a Mg(2+) binding site. A substrate-binding site is contributed by 314–315 (RY).

This sequence belongs to the terpene synthase family. Requires Mg(2+) as cofactor.

It carries out the reaction (2E,6E)-farnesyl diphosphate + H2O = (+)-(1(10)E,4E,6S,7R)-germacradien-6-ol + diphosphate. Its pathway is secondary metabolite biosynthesis; terpenoid biosynthesis. In terms of biological role, catalyzes the conversion of (2E,6E)-farnesyl diphosphate (FPP) to yield the sesquiterpene (+)-(1(10)E,4E,6S,7R)-germacradien-6-ol via a putative 1,10-cyclization, which could require the abstraction of the pyrophosphate from FPP to yield the (E,E)-germacradienyl cation. The only accepted substrate is farnesyl diphosphate (FPP). This Streptomyces pratensis (strain ATCC 33331 / IAF-45CD) protein is (+)-(1(10)E,4E,6S,7R)-germacradien-6-ol synthase.